The primary structure comprises 63 residues: Small ribosomal subunit protein eS30B (63 aa).

A disordered region spans residues 1-35; the sequence is MAKVHGSLARAGKVKSQTPKVEKTEKPKKPKGRAY. The residue at position 16 (Ser-16) is a Phosphoserine. Residue Thr-48 is modified to Phosphothreonine.

It belongs to the eukaryotic ribosomal protein eS30 family. As to quaternary structure, component of the small ribosomal subunit (SSU). Mature yeast ribosomes consist of a small (40S) and a large (60S) subunit. The 40S small subunit contains 1 molecule of ribosomal RNA (18S rRNA) and 33 different proteins (encoded by 57 genes). The large 60S subunit contains 3 rRNA molecules (25S, 5.8S and 5S rRNA) and 46 different proteins (encoded by 81 genes).

The protein resides in the cytoplasm. Component of the ribosome, a large ribonucleoprotein complex responsible for the synthesis of proteins in the cell. The small ribosomal subunit (SSU) binds messenger RNAs (mRNAs) and translates the encoded message by selecting cognate aminoacyl-transfer RNA (tRNA) molecules. The large subunit (LSU) contains the ribosomal catalytic site termed the peptidyl transferase center (PTC), which catalyzes the formation of peptide bonds, thereby polymerizing the amino acids delivered by tRNAs into a polypeptide chain. The nascent polypeptides leave the ribosome through a tunnel in the LSU and interact with protein factors that function in enzymatic processing, targeting, and the membrane insertion of nascent chains at the exit of the ribosomal tunnel. The chain is Small ribosomal subunit protein eS30B from Saccharomyces cerevisiae (strain ATCC 204508 / S288c) (Baker's yeast).